We begin with the raw amino-acid sequence, 148 residues long: Probable TtuB-protein conjugate cleaving protease (148 aa).

One can recognise an MPN domain in the interval 22 to 148; sequence HGLVLYVPRG…EGQEVALVVL (127 aa). Catalysis depends on Glu47, which acts as the Proton donor/acceptor. Zn(2+)-binding residues include His101, His103, and Asp114. A JAMM motif motif is present at residues 101–114; the sequence is HSHPKGPALPSPRD.

The protein belongs to the peptidase M67B family. The cofactor is Zn(2+).

Probable metalloprotease that cleaves the ubiquitin-like modifier protein TtuB from protein conjugates, hydrolyzing the isopeptide bond between a lysine residue of the target protein and the C-terminal glycine of the modifier protein. Does not seem to work for all the TtuB conjugates. This is Probable TtuB-protein conjugate cleaving protease from Thermus thermophilus (strain ATCC BAA-163 / DSM 7039 / HB27).